The sequence spans 234 residues: uncharacterized protein (234 aa).

2 consecutive transmembrane segments (helical) span residues 20 to 40 (LILLITIGVTLIMGFVQFKVI) and 176 to 196 (VMAFGAAVMGGITLAFFLHFL).

Belongs to the CpsC/CapA family.

Its subcellular location is the cell membrane. This is an uncharacterized protein from Bacillus subtilis (strain 168).